We begin with the raw amino-acid sequence, 300 residues long: Phosphatidylserine decarboxylase proenzyme (300 aa).

Catalysis depends on charge relay system; for autoendoproteolytic cleavage activity residues aspartate 117, histidine 173, and serine 260. Serine 260 functions as the Schiff-base intermediate with substrate; via pyruvic acid; for decarboxylase activity in the catalytic mechanism. Serine 260 is modified (pyruvic acid (Ser); by autocatalysis).

This sequence belongs to the phosphatidylserine decarboxylase family. PSD-B subfamily. Prokaryotic type II sub-subfamily. Heterodimer of a large membrane-associated beta subunit and a small pyruvoyl-containing alpha subunit. Pyruvate serves as cofactor. Is synthesized initially as an inactive proenzyme. Formation of the active enzyme involves a self-maturation process in which the active site pyruvoyl group is generated from an internal serine residue via an autocatalytic post-translational modification. Two non-identical subunits are generated from the proenzyme in this reaction, and the pyruvate is formed at the N-terminus of the alpha chain, which is derived from the carboxyl end of the proenzyme. The autoendoproteolytic cleavage occurs by a canonical serine protease mechanism, in which the side chain hydroxyl group of the serine supplies its oxygen atom to form the C-terminus of the beta chain, while the remainder of the serine residue undergoes an oxidative deamination to produce ammonia and the pyruvoyl prosthetic group on the alpha chain. During this reaction, the Ser that is part of the protease active site of the proenzyme becomes the pyruvoyl prosthetic group, which constitutes an essential element of the active site of the mature decarboxylase.

Its subcellular location is the cell membrane. It catalyses the reaction a 1,2-diacyl-sn-glycero-3-phospho-L-serine + H(+) = a 1,2-diacyl-sn-glycero-3-phosphoethanolamine + CO2. It functions in the pathway phospholipid metabolism; phosphatidylethanolamine biosynthesis; phosphatidylethanolamine from CDP-diacylglycerol: step 2/2. Functionally, catalyzes the formation of phosphatidylethanolamine (PtdEtn) from phosphatidylserine (PtdSer). This is Phosphatidylserine decarboxylase proenzyme from Fusobacterium nucleatum subsp. nucleatum (strain ATCC 25586 / DSM 15643 / BCRC 10681 / CIP 101130 / JCM 8532 / KCTC 2640 / LMG 13131 / VPI 4355).